The primary structure comprises 673 residues: MKMTRLYPLALGGLLLPAIANAQTSQQDESTLEVTASKQSSRSASANNVSSTVVSAPELSDAGVTASDKLPRVLPGLNIENSGNMLFSTISLRGVSSAQDFYNPAVTLYVDGVPQLSTNTIQALTDVQSVELLRGPQGTLYGKSAQGGIINIVTQQPDSTPRGYIEGGVSSRDSYRSKFNLSGPIQDGLLYGSVTLLRQVDDGDMINPATGSDDLGGTRASIGNVKLRLAPDDQPWEMGFAASRECTRATQDAYVGWNDIKGRKLSLSDGSPDPYMRRCTDSQTLSGKYTTDDWVFNLISAWQQQHYSRTFPSGSLIVNMPQRWNQDVQELRAATLGDARTVDMVFGLYRQNTREKLNSAYNMPTMPYLSSTGYTTAETLAAYSDLTWHLTDRFDIGGGVRFSHDKSSTQYHGSMLGNPFGDQGKSNDDQVLGQLSAGYMLTDDWRVYTRIAQGYKPSGYNIVPTAGLDAKPFVAEKSINYELGTRYETADVTLQAATFYTHTKDMQLYSGPVGMQTLSNAGKADATGVELEAKWRFAPGWSWDINGNVIRSEFTNDSELYHGNRVPFVPRYGAGSSVNGVIDTRYGALMPRLAVNLVGPHYFDGDNQLRQGTYATLDSSLGWQATERINISVHVDNLFDRRYRTYGYMNGSSAVAQVNMGRTVGINTRIDFF.

An N-terminal signal peptide occupies residues 1-22 (MKMTRLYPLALGGLLLPAIANA). The TonB box motif lies at 30–37 (STLEVTAS). One can recognise a TBDR plug domain in the interval 41–155 (SRSASANNVS…QGGIINIVTQ (115 aa)). The TBDR beta-barrel domain maps to 160–672 (TPRGYIEGGV…TVGINTRIDF (513 aa)). Residues 657–673 (QVNMGRTVGINTRIDFF) carry the TonB C-terminal box motif.

This sequence belongs to the TonB-dependent receptor family.

It is found in the cell outer membrane. In terms of biological role, receptor for the bacteriocin pesticin and for the siderophore yersiniabactin. The protein is Pesticin receptor (fyuA) of Yersinia enterocolitica.